We begin with the raw amino-acid sequence, 98 residues long: NADH-ubiquinone oxidoreductase chain 4L (98 aa).

A run of 3 helical transmembrane segments spans residues 1–21 (MPYI…GTLM), 29–49 (SLLC…LLSL), and 61–81 (LILL…LVMI).

The protein belongs to the complex I subunit 4L family. Core subunit of respiratory chain NADH dehydrogenase (Complex I) which is composed of 45 different subunits.

The protein resides in the mitochondrion inner membrane. The enzyme catalyses a ubiquinone + NADH + 5 H(+)(in) = a ubiquinol + NAD(+) + 4 H(+)(out). In terms of biological role, core subunit of the mitochondrial membrane respiratory chain NADH dehydrogenase (Complex I) which catalyzes electron transfer from NADH through the respiratory chain, using ubiquinone as an electron acceptor. Part of the enzyme membrane arm which is embedded in the lipid bilayer and involved in proton translocation. In Loxodonta africana (African elephant), this protein is NADH-ubiquinone oxidoreductase chain 4L (MT-ND4L).